A 420-amino-acid polypeptide reads, in one-letter code: UDP-N-acetyl-D-mannosamine dehydrogenase (420 aa).

NAD(+)-binding residues include Y13, I14, D33, T85, and T126. UDP-N-acetyl-alpha-D-mannosaminouronate contacts are provided by R160, V161, K212, N216, R219, H250, R252, and G263. K212 serves as the catalytic Proton donor/acceptor. C266 (nucleophile) is an active-site residue. UDP-N-acetyl-alpha-D-mannosaminouronate-binding residues include F330 and K331. An NAD(+)-binding site is contributed by R338. K416 provides a ligand contact to UDP-N-acetyl-alpha-D-mannosaminouronate.

It belongs to the UDP-glucose/GDP-mannose dehydrogenase family. WecC subfamily. Homodimer.

It catalyses the reaction UDP-N-acetyl-alpha-D-mannosamine + 2 NAD(+) + H2O = UDP-N-acetyl-alpha-D-mannosaminouronate + 2 NADH + 3 H(+). It participates in bacterial outer membrane biogenesis; enterobacterial common antigen biosynthesis. Its function is as follows. Catalyzes the four-electron oxidation of UDP-N-acetyl-D-mannosamine (UDP-ManNAc), reducing NAD(+) and releasing UDP-N-acetylmannosaminuronic acid (UDP-ManNAcA). The polypeptide is UDP-N-acetyl-D-mannosamine dehydrogenase (Salmonella typhimurium (strain LT2 / SGSC1412 / ATCC 700720)).